The primary structure comprises 299 residues: dTDP-4-dehydrorhamnose reductase (299 aa).

NADH contacts are provided by residues 10 to 12 (GQV), Asp-30, 39 to 40 (DF), and 63 to 65 (AHT). 11-12 (QV) is an NADPH binding site. Residues 39 to 40 (DF), 63 to 65 (AHT), and Tyr-102 contribute to the NADPH site. 104–105 (TD) serves as a coordination point for dTDP-beta-L-rhamnose. Positions 128 and 132 each coordinate NADH. NADPH is bound by residues Tyr-128 and Lys-132. Tyr-128 acts as the Proton donor/acceptor in catalysis. Trp-153 provides a ligand contact to dTDP-beta-L-rhamnose.

It belongs to the dTDP-4-dehydrorhamnose reductase family. Homodimer. Mg(2+) serves as cofactor.

It carries out the reaction dTDP-beta-L-rhamnose + NADP(+) = dTDP-4-dehydro-beta-L-rhamnose + NADPH + H(+). Its pathway is carbohydrate biosynthesis; dTDP-L-rhamnose biosynthesis. The protein operates within bacterial outer membrane biogenesis; LPS O-antigen biosynthesis. Functionally, involved in the biosynthesis of the dTDP-L-rhamnose which is an important component of lipopolysaccharide (LPS). Catalyzes the reduction of dTDP-6-deoxy-L-lyxo-4-hexulose to yield dTDP-L-rhamnose. RmlD uses NADH and NADPH nearly equally well. The protein is dTDP-4-dehydrorhamnose reductase of Escherichia coli (strain K12).